A 215-amino-acid chain; its full sequence is 3-isopropylmalate dehydratase small subunit (215 aa).

The protein belongs to the LeuD family. LeuD type 1 subfamily. Heterodimer of LeuC and LeuD.

It carries out the reaction (2R,3S)-3-isopropylmalate = (2S)-2-isopropylmalate. It participates in amino-acid biosynthesis; L-leucine biosynthesis; L-leucine from 3-methyl-2-oxobutanoate: step 2/4. Functionally, catalyzes the isomerization between 2-isopropylmalate and 3-isopropylmalate, via the formation of 2-isopropylmaleate. The sequence is that of 3-isopropylmalate dehydratase small subunit from Marinobacter nauticus (strain ATCC 700491 / DSM 11845 / VT8) (Marinobacter aquaeolei).